Reading from the N-terminus, the 373-residue chain is Ribosomal protein uL16 3-hydroxylase (373 aa).

One can recognise a JmjC domain in the interval 92 to 219; the sequence is PTAALMRPFR…LISGFADYVL (128 aa). Residues Ser114, 125-127, Arg140, and His187 contribute to the substrate site; that span reads HLD. Residues His125 and Asp127 each coordinate Fe cation. Residue His187 coordinates Fe cation.

It belongs to the ROX family. RoxA/YcfD subfamily. In terms of assembly, homodimer. Requires Fe(2+) as cofactor.

The catalysed reaction is L-arginyl-[ribosomal protein uL16] + 2-oxoglutarate + O2 = (3R)-3-hydroxy-L-arginyl-[ribosomal protein uL16] + succinate + CO2. Its function is as follows. Growth-regulating oxygenase that catalyzes the hydroxylation of ribosomal protein uL16 on 'Arg-81'. In Escherichia coli (strain K12), this protein is Ribosomal protein uL16 3-hydroxylase (roxA).